Here is a 264-residue protein sequence, read N- to C-terminus: Low molecular mass lipoprotein PBMHP-12 (264 aa).

The first 16 residues, 1–16, serve as a signal peptide directing secretion; the sequence is MKLLVVFAMCVPAASA.

It belongs to the 30 kDa lipoprotein family.

It is found in the secreted. The chain is Low molecular mass lipoprotein PBMHP-12 from Bombyx mori (Silk moth).